Here is a 266-residue protein sequence, read N- to C-terminus: Beta-lactamase OXA-11 (266 aa).

Residues 1 to 20 (MKTFAAYVIIACLSSTALAG) form the signal peptide. Catalysis depends on Ser-67, which acts as the Acyl-ester intermediate. Lys-70 bears the N6-carboxylysine mark. Position 205–207 (205–207 (KTG)) interacts with substrate.

The protein belongs to the class-D beta-lactamase family.

The catalysed reaction is a beta-lactam + H2O = a substituted beta-amino acid. Its function is as follows. Hydrolyzes carbenicillin, oxacillin and cephalosporin. Does not hydrolyze cefoxitin or carbapenems. This is Beta-lactamase OXA-11 (bla) from Pseudomonas aeruginosa.